Consider the following 455-residue polypeptide: tRNA modification GTPase MnmE (455 aa).

Residues Lys29, Glu91, and Arg131 each contribute to the (6S)-5-formyl-5,6,7,8-tetrahydrofolate site. Positions 226-378 (GLKVALVGLP…LIQELLKLAG (153 aa)) constitute a TrmE-type G domain. K(+) is bound at residue Asn236. Residues 236–241 (NVGKSS), 255–261 (TDLPGTT), 280–283 (DTAG), and 341–344 (NKAD) contribute to the GTP site. Ser240 serves as a coordination point for Mg(2+). K(+) contacts are provided by Thr255, Leu257, and Thr260. Thr261 is a binding site for Mg(2+). Lys455 contributes to the (6S)-5-formyl-5,6,7,8-tetrahydrofolate binding site.

The protein belongs to the TRAFAC class TrmE-Era-EngA-EngB-Septin-like GTPase superfamily. TrmE GTPase family. As to quaternary structure, homodimer. Heterotetramer of two MnmE and two MnmG subunits. Requires K(+) as cofactor.

The protein localises to the cytoplasm. Functionally, exhibits a very high intrinsic GTPase hydrolysis rate. Involved in the addition of a carboxymethylaminomethyl (cmnm) group at the wobble position (U34) of certain tRNAs, forming tRNA-cmnm(5)s(2)U34. This Prochlorococcus marinus (strain SARG / CCMP1375 / SS120) protein is tRNA modification GTPase MnmE.